The sequence spans 117 residues: DNA-directed RNA polymerase II subunit RPB11 (117 aa).

Belongs to the archaeal Rpo11/eukaryotic RPB11/RPC19 RNA polymerase subunit family. In terms of assembly, component of the RNA polymerase II (Pol II) complex consisting of 12 subunits.

The protein localises to the nucleus. Functionally, DNA-dependent RNA polymerase catalyzes the transcription of DNA into RNA using the four ribonucleoside triphosphates as substrates. Component of RNA polymerase II which synthesizes mRNA precursors and many functional non-coding RNAs. Pol II is the central component of the basal RNA polymerase II transcription machinery. It is composed of mobile elements that move relative to each other. RPB11 is part of the core element with the central large cleft. The chain is DNA-directed RNA polymerase II subunit RPB11 from Drosophila melanogaster (Fruit fly).